The chain runs to 1681 residues: Probable UDP-glucose:glycoprotein glucosyltransferase A (1681 aa).

Positions 1–25 (MARIFKFFVFLLIVFISNVLLLVES) are cleaved as a signal peptide. N-linked (GlcNAc...) asparagine glycosylation is found at Asn-81, Asn-148, Asn-174, and Asn-391. A disordered region spans residues 566–586 (TKSNNNNNNNNNNNDQNSQTS). Over residues 569–579 (NNNNNNNNNNN) the composition is skewed to low complexity. Residues Asn-1233 and Asn-1338 are each glycosylated (N-linked (GlcNAc...) asparagine). The interval 1346 to 1657 (LFSSKNDATD…QIELDHQNQL (312 aa)) is glucosyltransferase.

Belongs to the glycosyltransferase 8 family. Ca(2+) serves as cofactor. The cofactor is Mn(2+).

The protein resides in the endoplasmic reticulum lumen. It localises to the endoplasmic reticulum-Golgi intermediate compartment. It participates in protein modification; protein glycosylation. Functionally, recognizes glycoproteins with minor folding defects. Reglucosylates single N-glycans near the misfolded part of the protein, thus providing quality control for protein folding in the endoplasmic reticulum. The chain is Probable UDP-glucose:glycoprotein glucosyltransferase A (ggtA) from Dictyostelium discoideum (Social amoeba).